A 606-amino-acid polypeptide reads, in one-letter code: Glutamine--fructose-6-phosphate aminotransferase [isomerizing] (606 aa).

Residue Cys2 is the Nucleophile; for GATase activity of the active site. The region spanning 2-217 (CGIIGIVGKE…EGDYVALDHD (216 aa)) is the Glutamine amidotransferase type-2 domain. 2 SIS domains span residues 280 to 421 (VPGD…ARGT) and 454 to 596 (IAAD…VDQP). The active-site For Fru-6P isomerization activity is Lys601.

In terms of assembly, homodimer.

It localises to the cytoplasm. The enzyme catalyses D-fructose 6-phosphate + L-glutamine = D-glucosamine 6-phosphate + L-glutamate. Its function is as follows. Catalyzes the first step in hexosamine metabolism, converting fructose-6P into glucosamine-6P using glutamine as a nitrogen source. In Caulobacter vibrioides (strain ATCC 19089 / CIP 103742 / CB 15) (Caulobacter crescentus), this protein is Glutamine--fructose-6-phosphate aminotransferase [isomerizing].